Reading from the N-terminus, the 68-residue chain is MKVLLLFAVFFCLVQRNSGDIPPGIRNTVCFMQRGHCRLFMCRSGERKGDICSDPWNRCCVSSSIKNR.

The first 19 residues, 1 to 19 (MKVLLLFAVFFCLVQRNSG), serve as a signal peptide directing secretion. 3 disulfide bridges follow: C30/C59, C37/C52, and C42/C60.

It belongs to the beta-defensin family. As to expression, only expressed in epididymis (middle part of the caput).

It is found in the secreted. Has antimicrobial activity against E.coli. Plays a role in the defense response in the male reproductive tract, contributing to sperm maturation, storage and protection. The polypeptide is Sperm-associated antigen 11A (Rattus norvegicus (Rat)).